The chain runs to 290 residues: Light-independent protochlorophyllide reductase iron-sulfur ATP-binding protein (290 aa).

ATP is bound by residues 10 to 15 (GIGKST) and K39. S14 is a binding site for Mg(2+). Positions 95 and 129 each coordinate [4Fe-4S] cluster. 180–181 (NR) provides a ligand contact to ATP.

This sequence belongs to the NifH/BchL/ChlL family. Homodimer. Protochlorophyllide reductase is composed of three subunits; ChlL, ChlN and ChlB. [4Fe-4S] cluster serves as cofactor.

It is found in the plastid. It localises to the chloroplast. The enzyme catalyses chlorophyllide a + oxidized 2[4Fe-4S]-[ferredoxin] + 2 ADP + 2 phosphate = protochlorophyllide a + reduced 2[4Fe-4S]-[ferredoxin] + 2 ATP + 2 H2O. The protein operates within porphyrin-containing compound metabolism; chlorophyll biosynthesis (light-independent). Functionally, component of the dark-operative protochlorophyllide reductase (DPOR) that uses Mg-ATP and reduced ferredoxin to reduce ring D of protochlorophyllide (Pchlide) to form chlorophyllide a (Chlide). This reaction is light-independent. The L component serves as a unique electron donor to the NB-component of the complex, and binds Mg-ATP. This is Light-independent protochlorophyllide reductase iron-sulfur ATP-binding protein from Pyropia yezoensis (Susabi-nori).